We begin with the raw amino-acid sequence, 1243 residues long: Plasma membrane calcium-transporting ATPase 2 (1243 aa).

Positions 1–13 are enriched in polar residues; sequence MGDMTNSDFYSKN. Residues 1–24 are disordered; that stretch reads MGDMTNSDFYSKNQRNESSHGGEF. The Cytoplasmic segment spans residues 1 to 94; the sequence is MGDMTNSDFY…NFIPPKKPKT (94 aa). Ser18 and Ser27 each carry phosphoserine. The chain crosses the membrane as a helical span at residues 95–115; sequence FLQLVWEALQDVTLIILEIAA. Topologically, residues 116–152 are extracellular; it reads IISLGLSFYHPPGESNEGCATAQGGAEDEGEAEAGWI. A helical membrane pass occupies residues 153-173; that stretch reads EGAAILLSVICVVLVTAFNDW. The Cytoplasmic portion of the chain corresponds to 174–390; it reads SKEKQFRGLQ…KEKSVLQGKL (217 aa). The span at 296–308 shows a compositional bias: basic and acidic residues; the sequence is EEKKDKKGVKKGD. Positions 296–382 are disordered; the sequence is EEKKDKKGVK…KKKANMHKKE (87 aa). Composition is skewed to low complexity over residues 313 to 330 and 337 to 356; these read PAADGAAPANAAGSANAS and QDGSADSSQSKAKQQDGAAA. The chain crosses the membrane as a helical span at residues 391–410; that stretch reads TKLAVQIGKAGLVMSAITVI. The Extracellular portion of the chain corresponds to 411–443; that stretch reads ILVLYFTVDTFVVNKKPWLTECTPVYVQYFVKF. A helical membrane pass occupies residues 444 to 461; sequence FIIGVTVLVVAVPEGLPL. Topologically, residues 462–875 are cytoplasmic; the sequence is AVTISLAYSV…MWGRNVYDSI (414 aa). Asp499 acts as the 4-aspartylphosphate intermediate in catalysis. 2 residues coordinate Mg(2+): Asp820 and Asp824. A helical membrane pass occupies residues 876-895; sequence SKFLQFQLTVNVVAVIVAFT. The Extracellular segment spans residues 896–905; that stretch reads GACITQDSPL. Residues 906-926 form a helical membrane-spanning segment; it reads KAVQMLWVNLIMDTFASLALA. The Cytoplasmic portion of the chain corresponds to 927 to 946; that stretch reads TEPPTETLLLRKPYGRNKPL. Residues 947–969 traverse the membrane as a helical segment; the sequence is ISRTMMKNILGHAVYQLTLIFTL. Residues 970 to 987 are Extracellular-facing; that stretch reads LFVGEKMFQIDSGRNAPL. A helical transmembrane segment spans residues 988-1009; sequence HSPPSEHYTIIFNTFVMMQLFN. Residues 1010-1028 are Cytoplasmic-facing; it reads EINARKIHGERNVFDGIFR. Residues 1029 to 1050 form a helical membrane-spanning segment; that stretch reads NPIFCTIVLGTFAIQIVIVQFG. Residues 1051–1060 are Extracellular-facing; sequence GKPFSCSPLQ. Residues 1061 to 1082 traverse the membrane as a helical segment; sequence LDQWMWCIFIGLGELVWGQVIA. Residues 1083–1243 are Cytoplasmic-facing; it reads TIPTSRLKFL…SPIHSLETSL (161 aa). Phosphoserine occurs at positions 1107, 1116, 1117, 1121, 1130, 1131, and 1138. The tract at residues 1123 to 1140 is calmodulin-binding subdomain A; the sequence is LRRGQILWFRGLNRIQTQ. Residue Thr1139 is modified to Phosphothreonine; by PKC. Residues 1141–1150 form a calmodulin-binding subdomain B region; that stretch reads IRVVKAFRSS. 8 positions are modified to phosphoserine: Val1144, Phe1147, Arg1148, Tyr1152, Arg1161, Thr1162, Ile1175, and Ser1178. Thr1188 carries the post-translational modification Phosphothreonine. Residues 1194–1243 are disordered; sequence AALKQNSSPPSSLNKNNSAIDSGINLTTDTSKSATSSSPGSPIHSLETSL. Low complexity-rich tracts occupy residues 1196 to 1211 and 1220 to 1234; these read LKQNSSPPSSLNKNNS and TTDTSKSATSSSPGS. Residue Ser1201 is modified to Phosphoserine; by PKA. A Phosphoserine modification is found at Ser1211.

Belongs to the cation transport ATPase (P-type) (TC 3.A.3) family. Type IIB subfamily. Interacts with PDZD11. Isoforms containing segment B are found in brain, uterus, liver and kidney and in low levels in other tissues. Isoforms containing segment W are found in kidney, uterus, and pancreas. Isoforms containing segment Y are found in pancreas and in low levels in brain and heart. Isoforms containing segment Z are found in brain and heart and isoforms containing segment X are found in low levels in brain. Isoforms containing segment A are found in low levels in heart and small intestine while isoforms containing segment C are found in testis and in low levels in other tissues.

The protein resides in the cell membrane. The protein localises to the synapse. It is found in the apical cell membrane. Its subcellular location is the basolateral cell membrane. The enzyme catalyses Ca(2+)(in) + ATP + H2O = Ca(2+)(out) + ADP + phosphate + H(+). Functionally, ATP-driven Ca(2+) ion pump involved in the maintenance of basal intracellular Ca(2+) levels in specialized cells of cerebellar circuit and vestibular and cochlear systems. Uses ATP as an energy source to transport cytosolic Ca(2+) ions across the plasma membrane to the extracellular compartment. Has fast activation and Ca(2+) clearance rate suited to control fast neuronal Ca(2+) dynamics. At parallel fiber to Purkinje neuron synapse, mediates presynaptic Ca(2+) efflux in response to climbing fiber-induced Ca(2+) rise. Provides for fast return of Ca(2+) concentrations back to their resting levels, ultimately contributing to long-term depression induction and motor learning. Plays an essential role in hearing and balance. In cochlear hair cells, shuttles Ca(2+) ions from stereocilia to the endolymph and dissipates Ca(2+) transients generated by the opening of the mechanoelectrical transduction channels. Regulates Ca(2+) levels in the vestibular system, where it contributes to the formation of otoconia. In non-excitable cells, regulates Ca(2+) signaling through spatial control of Ca(2+) ions extrusion and dissipation of Ca(2+) transients generated by store-operated channels. In lactating mammary gland, allows for the high content of Ca(2+) ions in the milk. The protein is Plasma membrane calcium-transporting ATPase 2 (Atp2b2) of Rattus norvegicus (Rat).